Here is a 232-residue protein sequence, read N- to C-terminus: Phosphatidylserine decarboxylase proenzyme (232 aa).

The Schiff-base intermediate with substrate; via pyruvic acid role is filled by S190. S190 is subject to Pyruvic acid (Ser); by autocatalysis.

This sequence belongs to the phosphatidylserine decarboxylase family. PSD-A subfamily. As to quaternary structure, heterodimer of a large membrane-associated beta subunit and a small pyruvoyl-containing alpha subunit. Pyruvate serves as cofactor. Post-translationally, is synthesized initially as an inactive proenzyme. Formation of the active enzyme involves a self-maturation process in which the active site pyruvoyl group is generated from an internal serine residue via an autocatalytic post-translational modification. Two non-identical subunits are generated from the proenzyme in this reaction, and the pyruvate is formed at the N-terminus of the alpha chain, which is derived from the carboxyl end of the proenzyme. The post-translation cleavage follows an unusual pathway, termed non-hydrolytic serinolysis, in which the side chain hydroxyl group of the serine supplies its oxygen atom to form the C-terminus of the beta chain, while the remainder of the serine residue undergoes an oxidative deamination to produce ammonia and the pyruvoyl prosthetic group on the alpha chain.

Its subcellular location is the cell membrane. It carries out the reaction a 1,2-diacyl-sn-glycero-3-phospho-L-serine + H(+) = a 1,2-diacyl-sn-glycero-3-phosphoethanolamine + CO2. It participates in phospholipid metabolism; phosphatidylethanolamine biosynthesis; phosphatidylethanolamine from CDP-diacylglycerol: step 2/2. In terms of biological role, catalyzes the formation of phosphatidylethanolamine (PtdEtn) from phosphatidylserine (PtdSer). This chain is Phosphatidylserine decarboxylase proenzyme, found in Bradyrhizobium sp. (strain ORS 278).